Reading from the N-terminus, the 446-residue chain is Phosphoglucosamine mutase (446 aa).

Ser-99 (phosphoserine intermediate) is an active-site residue. Mg(2+)-binding residues include Ser-99, Asp-242, Asp-244, and Asp-246. At Ser-99 the chain carries Phosphoserine.

Belongs to the phosphohexose mutase family. Mg(2+) serves as cofactor. In terms of processing, activated by phosphorylation.

The enzyme catalyses alpha-D-glucosamine 1-phosphate = D-glucosamine 6-phosphate. In terms of biological role, catalyzes the conversion of glucosamine-6-phosphate to glucosamine-1-phosphate. The sequence is that of Phosphoglucosamine mutase from Campylobacter hominis (strain ATCC BAA-381 / DSM 21671 / CCUG 45161 / LMG 19568 / NCTC 13146 / CH001A).